A 208-amino-acid polypeptide reads, in one-letter code: Thymidylate kinase (208 aa).

Position 10-17 (10-17 (GLEGAGKS)) interacts with ATP.

It belongs to the thymidylate kinase family.

The enzyme catalyses dTMP + ATP = dTDP + ADP. Its function is as follows. Phosphorylation of dTMP to form dTDP in both de novo and salvage pathways of dTTP synthesis. The polypeptide is Thymidylate kinase (Pseudoalteromonas translucida (strain TAC 125)).